The sequence spans 168 residues: Probable prefoldin subunit 5 (168 aa).

Belongs to the prefoldin subunit alpha family. Heterohexamer of two PFD-alpha type and four PFD-beta type subunits.

Functionally, binds specifically to cytosolic chaperonin (c-CPN) and transfers target proteins to it. Binds to nascent polypeptide chain and promotes folding in an environment in which there are many competing pathways for nonnative proteins. This Drosophila melanogaster (Fruit fly) protein is Probable prefoldin subunit 5.